The following is a 472-amino-acid chain: Probable diguanylate cyclase DgcF (472 aa).

8 helical membrane-spanning segments follow: residues 21-41, 44-64, 90-110, 128-148, 167-187, 198-218, 237-257, and 273-293; these read SIAI…LRLV, LSLF…YVWL, VSLA…LLVV, LFNY…IGSV, FSTG…GVLP, IALI…SLAF, LLTF…VIDI, and LGIA…AAIN. Residues 330–467 enclose the GGDEF domain; the sequence is QHLTVMLLDI…GRNRTSTMRY (138 aa). The Mg(2+) site is built by aspartate 338 and isoleucine 339. Residues asparagine 346, histidine 351, and aspartate 355 each contribute to the substrate site. Glutamate 381 is a binding site for Mg(2+).

As to quaternary structure, homodimer. Requires Mg(2+) as cofactor.

The protein resides in the cell membrane. The catalysed reaction is 2 GTP = 3',3'-c-di-GMP + 2 diphosphate. It functions in the pathway purine metabolism; 3',5'-cyclic di-GMP biosynthesis. In terms of biological role, catalyzes the synthesis of cyclic-di-GMP (c-di-GMP) via the condensation of 2 GTP molecules. The polypeptide is Probable diguanylate cyclase DgcF (Escherichia coli O157:H7).